Consider the following 344-residue polypeptide: tRNA dimethylallyltransferase (344 aa).

Residue 19-26 participates in ATP binding; that stretch reads GPTASGKT. Residue 21–26 participates in substrate binding; that stretch reads TASGKT.

This sequence belongs to the IPP transferase family. In terms of assembly, monomer. Mg(2+) is required as a cofactor.

It carries out the reaction adenosine(37) in tRNA + dimethylallyl diphosphate = N(6)-dimethylallyladenosine(37) in tRNA + diphosphate. In terms of biological role, catalyzes the transfer of a dimethylallyl group onto the adenine at position 37 in tRNAs that read codons beginning with uridine, leading to the formation of N6-(dimethylallyl)adenosine (i(6)A). This is tRNA dimethylallyltransferase from Bifidobacterium animalis subsp. lactis (strain AD011).